The chain runs to 453 residues: Tubulin alpha-1/2/3 chain (453 aa).

Gln11 contributes to the GTP binding site. The residue at position 40 (Lys40) is an N6-acetyllysine. Residues Glu71, Ser140, Gly144, Thr145, Thr179, Asn206, and Asn228 each coordinate GTP. Residue Glu71 participates in Mg(2+) binding. Glu254 is an active-site residue. The disordered stretch occupies residues 429 to 453 (EKDYEEVGTESQEGDGEEGEDGGDQ). Residues 431-453 (DYEEVGTESQEGDGEEGEDGGDQ) are compositionally biased toward acidic residues.

It belongs to the tubulin family. As to quaternary structure, dimer of alpha and beta chains. A typical microtubule is a hollow water-filled tube with an outer diameter of 25 nm and an inner diameter of 15 nM. Alpha-beta heterodimers associate head-to-tail to form protofilaments running lengthwise along the microtubule wall with the beta-tubulin subunit facing the microtubule plus end conferring a structural polarity. Microtubules usually have 13 protofilaments but different protofilament numbers can be found in some organisms and specialized cells. Mg(2+) is required as a cofactor. Post-translationally, acetylation of alpha chains at Lys-40 stabilizes microtubules and affects affinity and processivity of microtubule motors. This modification has a role in multiple cellular functions, ranging from cell motility, cell cycle progression or cell differentiation to intracellular trafficking and signaling.

The protein localises to the cytoplasm. It is found in the cytoskeleton. The enzyme catalyses GTP + H2O = GDP + phosphate + H(+). Functionally, tubulin is the major constituent of microtubules, a cylinder consisting of laterally associated linear protofilaments composed of alpha- and beta-tubulin heterodimers. Microtubules grow by the addition of GTP-tubulin dimers to the microtubule end, where a stabilizing cap forms. Below the cap, tubulin dimers are in GDP-bound state, owing to GTPase activity of alpha-tubulin. The chain is Tubulin alpha-1/2/3 chain (TBA1) from Naegleria gruberi (Amoeba).